The sequence spans 218 residues: Riboflavin kinase (218 aa).

The first 19 residues, 1-19, serve as a signal peptide directing secretion; sequence MFTWTIYVSLLLVLAGTFL. Residues threonine 72 and asparagine 74 each coordinate Mg(2+). Glutamate 155 functions as the Nucleophile in the catalytic mechanism.

Belongs to the flavokinase family. Requires Zn(2+) as cofactor. It depends on Mg(2+) as a cofactor.

The protein resides in the microsome. Its subcellular location is the mitochondrion inner membrane. It is found in the endoplasmic reticulum. The enzyme catalyses riboflavin + ATP = FMN + ADP + H(+). The protein operates within cofactor biosynthesis; FMN biosynthesis; FMN from riboflavin (ATP route): step 1/1. Its function is as follows. Catalyzes the phosphorylation of riboflavin (vitamin B2) to form flavin mononucleotide (FMN) coenzyme. The protein is Riboflavin kinase (FMN1) of Saccharomyces cerevisiae (strain ATCC 204508 / S288c) (Baker's yeast).